The primary structure comprises 479 residues: Alpha,alpha-trehalose-phosphate synthase [UDP-forming] 2 (479 aa).

D-glucose 6-phosphate-binding residues include tyrosine 96 and aspartate 150. UDP is bound by residues arginine 287 and lysine 292. The UDP-alpha-D-glucose site is built by arginine 287 and lysine 292. A D-glucose 6-phosphate-binding site is contributed by arginine 325. Residues 363-364 (SV) and 390-394 (LVSFE) each bind UDP. A UDP-alpha-D-glucose-binding site is contributed by 386 to 394 (DGMNLVSFE).

Belongs to the glycosyltransferase 20 family.

It catalyses the reaction D-glucose 6-phosphate + UDP-alpha-D-glucose = alpha,alpha-trehalose 6-phosphate + UDP + H(+). It participates in carbohydrate biosynthesis. In terms of biological role, synthase catalytic subunit of the trehalose synthase complex that catalyzes the production of trehalose from glucose-6-phosphate and UDP-alpha-D-glucose in a two step process. The disaccharide trehalose serves as a storage carbohydrate that is mobilized during conidial germination. Regulates the level of trehalose as a protectant for cell integrity during thermal and oxidative stress. The chain is Alpha,alpha-trehalose-phosphate synthase [UDP-forming] 2 from Aspergillus fumigatus (strain ATCC MYA-4609 / CBS 101355 / FGSC A1100 / Af293) (Neosartorya fumigata).